A 258-amino-acid polypeptide reads, in one-letter code: NAD kinase (258 aa).

Residue aspartate 44 is the Proton acceptor of the active site. Residues 44–45 (DG), 116–117 (NE), aspartate 146, alanine 154, and 157–162 (TAYNLS) each bind NAD(+).

The protein belongs to the NAD kinase family. The cofactor is a divalent metal cation.

Its subcellular location is the cytoplasm. It carries out the reaction NAD(+) + ATP = ADP + NADP(+) + H(+). Its function is as follows. Involved in the regulation of the intracellular balance of NAD and NADP, and is a key enzyme in the biosynthesis of NADP. Catalyzes specifically the phosphorylation on 2'-hydroxyl of the adenosine moiety of NAD to yield NADP. The sequence is that of NAD kinase from Zymomonas mobilis subsp. mobilis (strain ATCC 31821 / ZM4 / CP4).